The chain runs to 863 residues: Protein ARG5,6, mitochondrial (863 aa).

The N-terminal 65 residues, 1-65, are a transit peptide targeting the mitochondrion; it reads MPSASLLVST…RYVSSTNGFS (65 aa). In terms of domain architecture, N-acetyltransferase spans 353–505; it reads KLVKRSSIGE…NFVKSCDTAS (153 aa). Serine 359 bears the Phosphoserine mark. Cysteine 675 is an active-site residue.

It in the N-terminal section; belongs to the acetylglutamate kinase family. This sequence in the C-terminal section; belongs to the NAGSA dehydrogenase family. Post-translationally, the protein precursor is cleaved into the two biologically active enzymes, the kinase and the reductase.

It localises to the mitochondrion. It catalyses the reaction N-acetyl-L-glutamate 5-semialdehyde + phosphate + NADP(+) = N-acetyl-L-glutamyl 5-phosphate + NADPH + H(+). The enzyme catalyses N-acetyl-L-glutamate + ATP = N-acetyl-L-glutamyl 5-phosphate + ADP. It functions in the pathway amino-acid biosynthesis; L-arginine biosynthesis; N(2)-acetyl-L-ornithine from L-glutamate: step 2/4. The protein operates within amino-acid biosynthesis; L-arginine biosynthesis; N(2)-acetyl-L-ornithine from L-glutamate: step 3/4. The kinase activity is inhibited by arginine. In Saccharomyces cerevisiae (strain ATCC 204508 / S288c) (Baker's yeast), this protein is Protein ARG5,6, mitochondrial (ARG5,6).